We begin with the raw amino-acid sequence, 228 residues long: Geranylgeranylglyceryl phosphate synthase (228 aa).

Lysine 13 is a sn-glycerol 1-phosphate binding site. Mg(2+) contacts are provided by aspartate 15 and threonine 41. Sn-glycerol 1-phosphate contacts are provided by residues 159–164, glycine 189, and 209–210; these read YIEYSG and GN.

It belongs to the GGGP/HepGP synthase family. Group I subfamily. The cofactor is Mg(2+).

Its subcellular location is the cytoplasm. It carries out the reaction sn-glycerol 1-phosphate + (2E,6E,10E)-geranylgeranyl diphosphate = sn-3-O-(geranylgeranyl)glycerol 1-phosphate + diphosphate. Its pathway is membrane lipid metabolism; glycerophospholipid metabolism. Its function is as follows. Prenyltransferase that catalyzes the transfer of the geranylgeranyl moiety of geranylgeranyl diphosphate (GGPP) to the C3 hydroxyl of sn-glycerol-1-phosphate (G1P). This reaction is the first ether-bond-formation step in the biosynthesis of archaeal membrane lipids. In Methanospirillum hungatei JF-1 (strain ATCC 27890 / DSM 864 / NBRC 100397 / JF-1), this protein is Geranylgeranylglyceryl phosphate synthase.